The primary structure comprises 120 residues: Large ribosomal subunit protein uL18 (120 aa).

This sequence belongs to the universal ribosomal protein uL18 family. Part of the 50S ribosomal subunit; part of the 5S rRNA/L5/L18/L25 subcomplex. Contacts the 5S and 23S rRNAs.

In terms of biological role, this is one of the proteins that bind and probably mediate the attachment of the 5S RNA into the large ribosomal subunit, where it forms part of the central protuberance. This Agrobacterium fabrum (strain C58 / ATCC 33970) (Agrobacterium tumefaciens (strain C58)) protein is Large ribosomal subunit protein uL18.